The chain runs to 566 residues: CTP synthase (566 aa).

Residues 1-265 (MTKYVFVTGG…DEIVCHKLNL (265 aa)) are amidoligase domain. Ser-13 is a binding site for CTP. A UTP-binding site is contributed by Ser-13. ATP is bound by residues 14–19 (SLGKGI) and Asp-71. Residues Asp-71 and Glu-139 each contribute to the Mg(2+) site. CTP-binding positions include 146–148 (DIE), 186–191 (KTKPTQ), and Lys-222. UTP contacts are provided by residues 186–191 (KTKPTQ) and Lys-222. Residues 290–543 (EIALVGKYVD…IEAAAVFADK (254 aa)) enclose the Glutamine amidotransferase type-1 domain. Residue Gly-351 coordinates L-glutamine. Cys-378 functions as the Nucleophile; for glutamine hydrolysis in the catalytic mechanism. L-glutamine contacts are provided by residues 379 to 382 (LGMQ), Glu-402, and Arg-469. Catalysis depends on residues His-516 and Glu-518. The tract at residues 545–566 (PSSEGAISADKPERTTTGAYIQ) is disordered.

It belongs to the CTP synthase family. In terms of assembly, homotetramer.

It carries out the reaction UTP + L-glutamine + ATP + H2O = CTP + L-glutamate + ADP + phosphate + 2 H(+). It catalyses the reaction L-glutamine + H2O = L-glutamate + NH4(+). The catalysed reaction is UTP + NH4(+) + ATP = CTP + ADP + phosphate + 2 H(+). The protein operates within pyrimidine metabolism; CTP biosynthesis via de novo pathway; CTP from UDP: step 2/2. Its activity is regulated as follows. Allosterically activated by GTP, when glutamine is the substrate; GTP has no effect on the reaction when ammonia is the substrate. The allosteric effector GTP functions by stabilizing the protein conformation that binds the tetrahedral intermediate(s) formed during glutamine hydrolysis. Inhibited by the product CTP, via allosteric rather than competitive inhibition. Its function is as follows. Catalyzes the ATP-dependent amination of UTP to CTP with either L-glutamine or ammonia as the source of nitrogen. Regulates intracellular CTP levels through interactions with the four ribonucleotide triphosphates. This Nitrosospira multiformis (strain ATCC 25196 / NCIMB 11849 / C 71) protein is CTP synthase.